The following is a 334-amino-acid chain: MARDEVRRMLPADIKREVLIKDENAETNPKWGFPPYERPIELHIQYGVINLDKPPGPTSHEVVAWIKRILNLEKAGHGGTLDPKVSGVLPVALEKATRVVQALLPAGKEYVALMHLHGDVPENKIIDVMKEFEGEIIQRPPLRSAVKRRLRTRKVYYIEILEIDGRDVLFKVGVEAGTYIRSLIHHIGLALGVGAHMAELRRTRSGPFKEDETLVTLHDLVDYYHFWKEDGIEKYLRRAIQPMEKAVEHLPKIWIKDSAVAAVAHGANLTVPGIVKLNVGIKRGDLVAIMTLKDELVALGKAMMTSQEMMQRSKGIAVDVEKVFMPRDWYPKLW.

Asp-82 serves as the catalytic Nucleophile. Residues 250–325 (LPKIWIKDSA…IAVDVEKVFM (76 aa)) form the PUA domain.

It belongs to the pseudouridine synthase TruB family. Type 2 subfamily.

It carries out the reaction uridine(55) in tRNA = pseudouridine(55) in tRNA. Could be responsible for synthesis of pseudouridine from uracil-55 in the psi GC loop of transfer RNAs. The polypeptide is Probable tRNA pseudouridine synthase B (Pyrococcus horikoshii (strain ATCC 700860 / DSM 12428 / JCM 9974 / NBRC 100139 / OT-3)).